A 243-amino-acid polypeptide reads, in one-letter code: MKLLALVALCAVGVASHRDKRQLSIGTISVSGAGGSTGCVVTGNVLYANGIRLRNLTSSEQSELATYQTEVEQYKTQLRNILSQRRENLRNRLMSQGRNQQQQSNDVSSQGGNDDGSIPKAPEKPSFCTAEDTTQYYFDGCMVQGNKVYVGGQYARDLSSDEISELQTFDTQQTAYQNAVQSQMQSQVQGLFGGSDFLSALFGGDRFNQQQQRQQPSSTTPASTSSTTLPPKPTVPQFCTAIF.

The signal sequence occupies residues 1 to 16 (MKLLALVALCAVGVAS). N-linked (GlcNAc...) asparagine glycosylation is present at asparagine 55. Disordered stretches follow at residues 95-126 (SQGRNQQQQSNDVSSQGGNDDGSIPKAPEKPS) and 208-235 (NQQQQRQQPSSTTPASTSSTTLPPKPTV). Composition is skewed to low complexity over residues 99–112 (NQQQQSNDVSSQGG) and 209–229 (QQQQRQQPSSTTPASTSSTTL). Cysteine 141 and cysteine 239 are joined by a disulfide.

It belongs to the protease inhibitor I33 family.

It localises to the secreted. This is an uncharacterized protein from Caenorhabditis elegans.